Here is a 911-residue protein sequence, read N- to C-terminus: Protein dead ringer (911 aa).

3 disordered regions span residues 1 to 44 (MQLR…DCDS), 67 to 87 (SGGG…LSHH), and 172 to 274 (HVTS…QNNG). Residues 19 to 34 (IERDSDLGDDLSHGDR) are compositionally biased toward basic and acidic residues. S30 carries the phosphoserine modification. T35 is modified (phosphothreonine). S44 carries the phosphoserine modification. A compositionally biased stretch (low complexity) spans 174-201 (TSSPSGGNGSSYNGGTTPTNSSNSNATT). Gly residues predominate over residues 202–231 (NGGGTAGPGGTGGSGGGGGGGGGGGGGVGG). Low complexity predominate over residues 252 to 273 (AANSASNSSTSSEASNSSQQNN). An ARID domain is found at 293-385 (DPKRKEFLDD…YLYPYECEKK (93 aa)). Disordered stretches follow at residues 501–633 (GMPP…VGSG), 662–775 (PSMG…GKLN), and 826–877 (QSET…DQDM). Residues 512–550 (HQQQHSQQQQQQQHHHQQQQQQQSQQQHHLQQQRQRSQS) are compositionally biased toward low complexity. Polar residues predominate over residues 570 to 600 (HNNNSPPGSAHTSPQQREALNLSDSPPNLTN). Phosphoserine is present on residues S592 and S594. The segment covering 601-621 (IKREREREPTPEPVDQDDKFV) has biased composition (basic and acidic residues). Residue S720 is modified to Phosphoserine. The REKLES domain maps to 731–825 (TTGGSVGHRH…GVLVANVPLS (95 aa)). Over residues 737 to 751 (GHRHSSPVSTKKKGG) the composition is skewed to basic residues. Residues 841 to 853 (TVEEEKDEEEEEE) show a composition bias toward acidic residues. The segment covering 854 to 870 (PKAAEEESHRSPVKQEN) has biased composition (basic and acidic residues).

Present in the pharyngeal muscles, hindgut epithelium, amnioserosa, ring gland, midgut-hindgut junction, posterior region of each brain lobe, longitudinal glial cells of the CNS and the salivary gland duct of germ-band retracted embryos.

The protein resides in the nucleus. Its function is as follows. Transcription factor which is a downstream target of gcm and repo. Directly or indirectly activates the transcription of locos and pros, which are essential for the development of some glial cells. Plays an essential role in defining the cell shape and migration characteristics of longitudinal glia that enable them to establish a normal axon scaffold. This Drosophila melanogaster (Fruit fly) protein is Protein dead ringer (retn).